We begin with the raw amino-acid sequence, 55 residues long: Serine protease inhibitor Kazal-type 1 (55 aa).

In terms of domain architecture, Kazal-like spans 2-55; the sequence is QGRDANCNYEFPGCPRNLEPVCGTDGNTYNNECLLCMENKKRDVPIRIQKDGPC. 3 cysteine pairs are disulfide-bonded: cysteine 8–cysteine 37, cysteine 15–cysteine 34, and cysteine 23–cysteine 55.

The protein localises to the secreted. In terms of biological role, serine protease inhibitor which exhibits anti-trypsin activity. In the pancreas, protects against trypsin-catalyzed premature activation of zymogens. Functionally, in the male reproductive tract, binds to sperm heads where it modulates sperm capacitance by inhibiting calcium uptake and nitrogen oxide (NO) production. In Monodelphis domestica (Gray short-tailed opossum), this protein is Serine protease inhibitor Kazal-type 1 (SPINK1).